The primary structure comprises 271 residues: Norsolorinic acid ketoreductase (271 aa).

Residues methionine 1–proline 22 are disordered. NADP(+) contacts are provided by isoleucine 36, asparagine 112, tyrosine 185, lysine 189, valine 216, and threonine 218. The active-site Proton donor is tyrosine 185. The Lowers pKa of active site Tyr role is filled by lysine 189.

The protein belongs to the short-chain dehydrogenases/reductases (SDR) family.

It localises to the cytoplasm. The protein resides in the cytosol. The protein localises to the vacuole. The catalysed reaction is (1'S)-averantin + NADP(+) = norsolorinic acid + NADPH + H(+). The protein operates within mycotoxin biosynthesis; aflatoxin biosynthesis. Its function is as follows. Norsolorinic acid ketoreductase; part of the gene cluster that mediates the biosynthesis of aflatoxins, a group of polyketide-derived furanocoumarins, and part of the most toxic and carcinogenic compounds among the known mycotoxins. The four major aflatoxins produced by A.parasiticus are aflatoxin B1 (AFB1), aflatoxin B2 (AFB2), aflatoxin G1 (AFG1) and aflatoxin G2 (AFG2). Within the aflatoxin pathway, the norsolorinic acid ketoreductase aflD performs the second step by catalyzing the dehydration of norsolorinic acid (NOR) to form (1'S)-averantin (AVN). The biosynthesis of aflatoxins begins with the norsolorinic acid synthase aflC that combines a hexanoyl starter unit produced by the fatty acid synthase aflA/aflB and 7 malonyl-CoA extender units to synthesize the precursor NOR. The second step is the conversion of NOR to averantin and requires the norsolorinic acid ketoreductase aflD, which catalyzes the dehydration of norsolorinic acid to form (1'S)-averantin. The norsolorinic acid reductases aflE and aflF may also play a role in the conversion of NOR to AVN. The cytochrome P450 monooxygenase aflG then catalyzes the hydroxylation of AVN to 5'hydroxyaverantin (HAVN). The next step is performed by the 5'-hydroxyaverantin dehydrogenase aflH that transforms HAVN to 5'-oxoaverantin (OAVN) which is further converted to averufin (AVF) by aflK that plays a dual role in the pathway, as a 5'-oxoaverantin cyclase that mediates conversion of 5'-oxoaverantin, as well as a versicolorin B synthase in a later step in the pathway. The averufin oxidase aflI catalyzes the conversion of AVF to versiconal hemiacetal acetate (VHA). VHA is then the substrate for the versiconal hemiacetal acetate esterase aflJ to yield versiconal (VAL). Versicolorin B synthase aflK then converts VAL to versicolorin B (VERB) by closing the bisfuran ring of aflatoxin which is required for DNA-binding, thus giving to aflatoxin its activity as a mutagen. Then, the activity of the versicolorin B desaturase aflL leads to versicolorin A (VERA). A branch point starts from VERB since it can also be converted to dihydrodemethylsterigmatocystin (DMDHST), probably also by aflL, VERA being a precursor for aflatoxins B1 and G1, and DMDHST for aflatoxins B2 and G2. Next, the versicolorin reductase aflM and the cytochrome P450 monooxygenase aflN are involved in conversion of VERA to demethylsterigmatocystin (DMST). AflX and aflY seem also involved in this step, through probable aflX-mediated epoxide ring-opening step following versicolorin A oxidation and aflY-mediated Baeyer-Villiger oxidation required for the formation of the xanthone ring. The methyltransferase aflO then leads to the modification of DMST to sterigmatocystin (ST), and of DMDHST to dihydrosterigmatocystin (DHST). Both ST and DHST are then substrates of the O-methyltransferase aflP to yield O-methylsterigmatocystin (OMST) and dihydro-O-methylsterigmatocystin (DHOMST), respectively. Finally OMST is converted to aflatoxins B1 and G1, and DHOMST to aflatoxins B2 and G2, via the action of several enzymes including O-methylsterigmatocystin oxidoreductase aflQ, the cytochrome P450 monooxygenase aflU, but also the NADH-dependent flavin oxidoreductase nadA which is specifically required for the synthesis of AFG1. In Aspergillus parasiticus (strain ATCC 56775 / NRRL 5862 / SRRC 143 / SU-1), this protein is Norsolorinic acid ketoreductase.